The primary structure comprises 247 residues: Membrane-spanning 4-domains subfamily A member 6D (247 aa).

Residues 1 to 46 (MIPQVVTSETVTVISPNGISFPQTDKPQPSHQSQDSLKKHLKAEIK) are Cytoplasmic-facing. A helical membrane pass occupies residues 47 to 67 (VMAAIQIMCAVMVLSLGIILA). Residues 68 to 80 (SVPSNLHFTSVFS) lie on the Extracellular side of the membrane. A helical membrane pass occupies residues 81–101 (ILLESGYPFVGALFFAISGIL). The Cytoplasmic segment spans residues 102-121 (SIVTEKKMTKPLVHSSLALS). Residues 122–142 (ILSVLSALTGIAILSVSLAAL) traverse the membrane as a helical segment. Over 143 to 180 (EPALQQCKLAFTQLDTTQDAYHFFSPEPLNSCFVAKAA) the chain is Extracellular. Residues 181–201 (LTGVFSLMLISSVLELGLAVL) traverse the membrane as a helical segment. Residues 202 to 247 (TATLWWKQSSSAFSGNVIFLSQNSKNKSSVSSESLCNPTYENILTS) are Cytoplasmic-facing. Position 235 is a phosphoserine (Ser235).

Belongs to the MS4A family. Expressed in thymus, spleen, intestine, colon, testis, heart, liver, brain, kidney, peripheral lymph node and bone marrow.

The protein localises to the membrane. In terms of biological role, may be involved in signal transduction as a component of a multimeric receptor complex. This is Membrane-spanning 4-domains subfamily A member 6D (Ms4a6d) from Mus musculus (Mouse).